We begin with the raw amino-acid sequence, 192 residues long: Leucyl/phenylalanyl-tRNA--protein transferase (192 aa).

The protein belongs to the L/F-transferase family.

The protein localises to the cytoplasm. It carries out the reaction N-terminal L-lysyl-[protein] + L-leucyl-tRNA(Leu) = N-terminal L-leucyl-L-lysyl-[protein] + tRNA(Leu) + H(+). The catalysed reaction is N-terminal L-arginyl-[protein] + L-leucyl-tRNA(Leu) = N-terminal L-leucyl-L-arginyl-[protein] + tRNA(Leu) + H(+). It catalyses the reaction L-phenylalanyl-tRNA(Phe) + an N-terminal L-alpha-aminoacyl-[protein] = an N-terminal L-phenylalanyl-L-alpha-aminoacyl-[protein] + tRNA(Phe). Functionally, functions in the N-end rule pathway of protein degradation where it conjugates Leu, Phe and, less efficiently, Met from aminoacyl-tRNAs to the N-termini of proteins containing an N-terminal arginine or lysine. In Synechococcus sp. (strain JA-3-3Ab) (Cyanobacteria bacterium Yellowstone A-Prime), this protein is Leucyl/phenylalanyl-tRNA--protein transferase.